A 404-amino-acid polypeptide reads, in one-letter code: Cysteine desulfurase IscS (404 aa).

Pyridoxal 5'-phosphate is bound by residues 75-76 (AT), asparagine 155, glutamine 183, and 203-205 (SSH). Residue lysine 206 is modified to N6-(pyridoxal phosphate)lysine. Pyridoxal 5'-phosphate is bound at residue threonine 243. The active-site Cysteine persulfide intermediate is the cysteine 328. Cysteine 328 provides a ligand contact to [2Fe-2S] cluster.

This sequence belongs to the class-V pyridoxal-phosphate-dependent aminotransferase family. NifS/IscS subfamily. In terms of assembly, homodimer. Forms a heterotetramer with IscU, interacts with other sulfur acceptors. Requires pyridoxal 5'-phosphate as cofactor.

It localises to the cytoplasm. It catalyses the reaction (sulfur carrier)-H + L-cysteine = (sulfur carrier)-SH + L-alanine. It functions in the pathway cofactor biosynthesis; iron-sulfur cluster biosynthesis. Functionally, master enzyme that delivers sulfur to a number of partners involved in Fe-S cluster assembly, tRNA modification or cofactor biosynthesis. Catalyzes the removal of elemental sulfur atoms from cysteine to produce alanine. Functions as a sulfur delivery protein for Fe-S cluster synthesis onto IscU, an Fe-S scaffold assembly protein, as well as other S acceptor proteins. This chain is Cysteine desulfurase IscS, found in Haemophilus influenzae (strain PittEE).